We begin with the raw amino-acid sequence, 97 residues long: Large ribosomal subunit protein bL31B (97 aa).

This sequence belongs to the bacterial ribosomal protein bL31 family. Type B subfamily. In terms of assembly, part of the 50S ribosomal subunit.

This is Large ribosomal subunit protein bL31B (rpmE2) from Mycolicibacterium paratuberculosis (strain ATCC BAA-968 / K-10) (Mycobacterium paratuberculosis).